The chain runs to 254 residues: MNPLAKRIIPCLDIKEGRVVKGVNFLGLRDAGDPVEVARRYNEEGADEIAFLDITATHERRDTMCDIVRAVAKEVFIPLTVGGGIRKLEDMYTLLNAGCDKVSINSSAIKNPSLIDEGAKRFGSQCIVVAIDAKSRADKSGWNVYINGGRIDTGIDLLEWTKEVYERGAGEILLTSMDADGTKAGYDCEQLQTLSKLVDIPLIASGGAGTMEHIKEAFLSGADAALAATIFHYKEIDIMDLKRYLRSEGIEVRL.

Active-site residues include Asp-13 and Asp-132.

Belongs to the HisA/HisF family. In terms of assembly, heterodimer of HisH and HisF.

It localises to the cytoplasm. The enzyme catalyses 5-[(5-phospho-1-deoxy-D-ribulos-1-ylimino)methylamino]-1-(5-phospho-beta-D-ribosyl)imidazole-4-carboxamide + L-glutamine = D-erythro-1-(imidazol-4-yl)glycerol 3-phosphate + 5-amino-1-(5-phospho-beta-D-ribosyl)imidazole-4-carboxamide + L-glutamate + H(+). It participates in amino-acid biosynthesis; L-histidine biosynthesis; L-histidine from 5-phospho-alpha-D-ribose 1-diphosphate: step 5/9. IGPS catalyzes the conversion of PRFAR and glutamine to IGP, AICAR and glutamate. The HisF subunit catalyzes the cyclization activity that produces IGP and AICAR from PRFAR using the ammonia provided by the HisH subunit. The polypeptide is Imidazole glycerol phosphate synthase subunit HisF (Wolinella succinogenes (strain ATCC 29543 / DSM 1740 / CCUG 13145 / JCM 31913 / LMG 7466 / NCTC 11488 / FDC 602W) (Vibrio succinogenes)).